Here is a 382-residue protein sequence, read N- to C-terminus: Mannitol-1-phosphate 5-dehydrogenase (382 aa).

NAD(+) is bound at residue 3–14; the sequence is ALHFGAGNIGRG. Position 269 is an N6-acetyllysine (lysine 269).

The protein belongs to the mannitol dehydrogenase family. In terms of assembly, monomer.

The enzyme catalyses D-mannitol 1-phosphate + NAD(+) = beta-D-fructose 6-phosphate + NADH + H(+). The polypeptide is Mannitol-1-phosphate 5-dehydrogenase (Escherichia coli O157:H7).